The primary structure comprises 613 residues: DNA repair and telomere maintenance protein nbs1 (613 aa).

The FHA domain occupies 23–86 (YIVGRNVSDD…FGTKVNEKVV (64 aa)). BRCT domains lie at 107–186 (FTIN…YLST) and 228–302 (GFSC…KIII). Position 355 is a phosphoserine (Ser355). 2 disordered regions span residues 381–428 (KEPE…GQGK) and 546–613 (TEVF…KFHF). Polar residues predominate over residues 387–399 (LSNQSNNGSAQNK). Positions 400-409 (KSGDNSEKTK) are enriched in basic and acidic residues. Low complexity predominate over residues 574-592 (SSDKSGKSSISKKSSNSFK). The FxF/Y motif signature appears at 611-613 (FHF).

This sequence belongs to the Nibrin family. Component of the MRN complex composed of two heterodimers rad32 and rad50 associated with a single nbs1. Interacts with (phosphorylated) ctp1/CtIP. Interacts (via FxF/Y motif) with tel1/atm.

The protein localises to the nucleus. Its subcellular location is the chromosome. It localises to the telomere. Functionally, component of the MRN complex, which plays a central role in double-strand break (DSB) repair, DNA recombination, maintenance of telomere integrity and meiosis. The MRN complex is involved in the repair of DNA double-strand breaks (DSBs) via homologous recombination (HR), an error-free mechanism which primarily occurs during S and G2 phases. The complex (1) mediates the end resection of damaged DNA, which generates proper single-stranded DNA, a key initial steps in HR, and is (2) required for the recruitment of other repair factors and efficient activation of tel1/atm upon DNA damage. The MRN complex possesses single-strand endonuclease activity and double-strand-specific 3'-5' exonuclease activity, which are provided by MRE11, to initiate end resection, which is required for single-strand invasion and recombination. Within the MRN complex, nbs1 acts as a protein-protein adapter, which specifically recognizes and binds phosphorylated proteins, promoting their recruitment to DNA damage sites. Recruits rad32 and rad50 components of the MRN complex to DSBs in response to DNA damage. Promotes the recruitment of tel1/atm to the DNA damage sites, activating tel1/atm function. Mediates the recruitment of phosphorylated ctp1/CtIP to DSBs, leading to cooperation between the MRN complex and ctp1/CtIP to initiate end resection. In Schizosaccharomyces pombe (strain 972 / ATCC 24843) (Fission yeast), this protein is DNA repair and telomere maintenance protein nbs1.